Consider the following 691-residue polypeptide: Elongation factor G (691 aa).

One can recognise a tr-type G domain in the interval 8 to 283 (EDYRNFGIMA…AVVDFLPNPT (276 aa)). Residues 17-24 (AHIDAGKT), 81-85 (DTPGH), and 135-138 (NKMD) each bind GTP.

It belongs to the TRAFAC class translation factor GTPase superfamily. Classic translation factor GTPase family. EF-G/EF-2 subfamily.

It is found in the cytoplasm. In terms of biological role, catalyzes the GTP-dependent ribosomal translocation step during translation elongation. During this step, the ribosome changes from the pre-translocational (PRE) to the post-translocational (POST) state as the newly formed A-site-bound peptidyl-tRNA and P-site-bound deacylated tRNA move to the P and E sites, respectively. Catalyzes the coordinated movement of the two tRNA molecules, the mRNA and conformational changes in the ribosome. The protein is Elongation factor G of Maricaulis maris (strain MCS10) (Caulobacter maris).